The sequence spans 581 residues: Laccase-2 (581 aa).

The N-terminal stretch at 1 to 19 (MKYSTVFTALTALFAQASA) is a signal peptide. 2 Plastocyanin-like domains span residues 74–191 (SVEN…GPAT) and 197–353 (DVGA…YDSS). N-linked (GlcNAc...) asparagine glycosylation is found at Asn-77, Asn-93, and Asn-120. Residues His-125, His-127, His-169, and His-171 each contribute to the Cu cation site. A disulfide bond links Cys-146 and Cys-562. Residues Asn-232, Asn-283, Asn-343, Asn-408, Asn-427, and Asn-441 are each glycosylated (N-linked (GlcNAc...) asparagine). The Plastocyanin-like 3 domain occupies 413-547 (LLDWSSPTTL…AMQFVESQSS (135 aa)). The Cu cation site is built by His-464, His-467, His-469, His-526, Cys-527, His-528, and His-532.

It belongs to the multicopper oxidase family. Requires Cu cation as cofactor.

It localises to the secreted. It catalyses the reaction 4 hydroquinone + O2 = 4 benzosemiquinone + 2 H2O. Its function is as follows. Lignin degradation and detoxification of lignin-derived products. The protein is Laccase-2 (lcc2) of Botryotinia fuckeliana (Noble rot fungus).